A 254-amino-acid polypeptide reads, in one-letter code: UPF0246 protein BDI_1226 (254 aa).

It belongs to the UPF0246 family.

The chain is UPF0246 protein BDI_1226 from Parabacteroides distasonis (strain ATCC 8503 / DSM 20701 / CIP 104284 / JCM 5825 / NCTC 11152).